Consider the following 80-residue polypeptide: MTKPQINLQDAFLNQVRKENIPVTIFLINGFQLKGMVKGFDNFTVILESDGKQLMVYKHAISTISPLRPVNTSFSENKPI.

One can recognise a Sm domain in the interval 10–70 (DAFLNQVRKE…ISTISPLRPV (61 aa)).

This sequence belongs to the Hfq family. In terms of assembly, homohexamer.

RNA chaperone that binds small regulatory RNA (sRNAs) and mRNAs to facilitate mRNA translational regulation in response to envelope stress, environmental stress and changes in metabolite concentrations. Also binds with high specificity to tRNAs. This Desulforamulus reducens (strain ATCC BAA-1160 / DSM 100696 / MI-1) (Desulfotomaculum reducens) protein is RNA-binding protein Hfq.